We begin with the raw amino-acid sequence, 327 residues long: Malate dehydrogenase (327 aa).

11–17 is a binding site for NAD(+); it reads GAAGQIS. Substrate-binding residues include arginine 92 and arginine 98. NAD(+) contacts are provided by residues asparagine 105, glutamine 112, and 129–131; that span reads VGN. Residues asparagine 131 and arginine 162 each coordinate substrate. Histidine 187 serves as the catalytic Proton acceptor.

It belongs to the LDH/MDH superfamily. MDH type 2 family.

It carries out the reaction (S)-malate + NAD(+) = oxaloacetate + NADH + H(+). In terms of biological role, catalyzes the reversible oxidation of malate to oxaloacetate. The polypeptide is Malate dehydrogenase (Nitrosomonas europaea (strain ATCC 19718 / CIP 103999 / KCTC 2705 / NBRC 14298)).